A 183-amino-acid chain; its full sequence is MAKKATLVDHGAAKGKKKAQSKVSKKNANKRLVVATNRRARHDYTILDTWEAGIQLVGTEVKSLREGKASLIDSFATIDDGEVWLRHLHIPEYSKGHWTNHSPRRTRKLLLHRNEIDSIMGKVRDGNNTLIPLSLYFSDGKLKVELALGRGKQDYDRRQDIKRRTEEREATRALGRRVKGLTG.

The tract at residues 1-27 (MAKKATLVDHGAAKGKKKAQSKVSKKN) is disordered. Residues 13–27 (AKGKKKAQSKVSKKN) are compositionally biased toward basic residues.

Belongs to the SmpB family.

Its subcellular location is the cytoplasm. Its function is as follows. Required for rescue of stalled ribosomes mediated by trans-translation. Binds to transfer-messenger RNA (tmRNA), required for stable association of tmRNA with ribosomes. tmRNA and SmpB together mimic tRNA shape, replacing the anticodon stem-loop with SmpB. tmRNA is encoded by the ssrA gene; the 2 termini fold to resemble tRNA(Ala) and it encodes a 'tag peptide', a short internal open reading frame. During trans-translation Ala-aminoacylated tmRNA acts like a tRNA, entering the A-site of stalled ribosomes, displacing the stalled mRNA. The ribosome then switches to translate the ORF on the tmRNA; the nascent peptide is terminated with the 'tag peptide' encoded by the tmRNA and targeted for degradation. The ribosome is freed to recommence translation, which seems to be the essential function of trans-translation. In Corynebacterium kroppenstedtii (strain DSM 44385 / JCM 11950 / CIP 105744 / CCUG 35717), this protein is SsrA-binding protein.